Here is a 466-residue protein sequence, read N- to C-terminus: UDP-glycosyltransferase 91B1 (466 aa).

Residues threonine 286, 342-344 (VPQ), 359-367 (HCGWGSAVE), and 381-384 (NLDQ) contribute to the UDP-alpha-D-glucose site.

The protein belongs to the UDP-glycosyltransferase family.

This is UDP-glycosyltransferase 91B1 (UGT91B1) from Arabidopsis thaliana (Mouse-ear cress).